The primary structure comprises 187 residues: 3'-5' DNA exonuclease Cap18 (187 aa).

The region spanning Val9–Phe173 is the Exonuclease domain. Mg(2+) contacts are provided by Asp12, Met25, His160, and Asp165. The active-site Proton donor/acceptor is the His160.

It belongs to the Cap18 exonuclease family. In terms of assembly, homodimer.

Effector component of a CBASS antivirus system. CBASS (cyclic oligonucleotide-based antiphage signaling system) provides immunity against bacteriophage. The CD-NTase protein synthesizes cyclic nucleotides in response to infection; these serve as specific second messenger signals. The signals activate a diverse range of effectors, leading to bacterial cell death and thus abortive phage infection. A type III CBASS system. A sequence non-specific 3'-5' DNA exonuclease that preferentially degrades ssDNA with 3' overhangs or a mismatch at the 3' end. Expression of this CBASS system (Cap17-CapW-CdnC-Cap7-Cap6-Cap18-Cap19) in a susceptible E.coli (strain JP313) confers resistance to bacteriophage lambda cI--. The chain is 3'-5' DNA exonuclease Cap18 from Escherichia coli.